We begin with the raw amino-acid sequence, 753 residues long: Elongin-A2 (753 aa).

A TFIIS N-terminal domain is found at 5-80; it reads STTLHAVEKL…ARWKKLVLVD (76 aa). Disordered regions lie at residues 80 to 245, 261 to 453, and 477 to 497; these read DRNT…DWHS, ETPR…GPKT, and LSDSDSMTSQAKPEALSSPKF. Composition is skewed to basic and acidic residues over residues 147–157 and 271–285; these read HSREPRAERKC and ARDRQPSDFKTDKEG. Basic residues predominate over residues 306–317; the sequence is KRPQHSHSNKKR. The segment covering 333-348 has biased composition (basic and acidic residues); it reads SPEEKEQLSNDRETQE. A compositionally biased stretch (acidic residues) spans 366-377; the sequence is EVEEVDMAEEFE. Over residues 409–428 the composition is skewed to basic and acidic residues; the sequence is DKQRKANESKGTRESWDSAK. The interval 500 to 659 is activation domain; that stretch reads EAAFPGRRVN…TPYDTSRRQE (160 aa). Residues 528–537 are BC-box; that stretch reads TLRQQCAQVL. Positions 528 to 537 are interacting with Elongin BC complex; that stretch reads TLRQQCAQVL. The disordered stretch occupies residues 650–735; sequence TPYDTSRRQE…KTRKQAAKKV (86 aa). Positions 654 to 663 are enriched in basic and acidic residues; that stretch reads TSRRQEKSAG. The segment covering 680–700 has biased composition (low complexity); it reads GSSHTPSSQSSSGGGRDSSSS.

Heterotrimer of an A (ELOA, ELOA2 or ELOA3P), ELOB and ELOC subunit. Specifically expressed in testis.

It is found in the nucleus. Its function is as follows. SIII, also known as elongin, is a general transcription elongation factor that increases the RNA polymerase II transcription elongation past template-encoded arresting sites. Subunit A2 is transcriptionally active but its transcription activity is not enhanced by binding to the dimeric complex of the SIII regulatory subunits B and C (elongin BC complex). In Homo sapiens (Human), this protein is Elongin-A2.